Consider the following 263-residue polypeptide: Putative steroid dehydrogenase 4 (263 aa).

The active-site Proton acceptor is the Tyr154.

It belongs to the short-chain dehydrogenases/reductases (SDR) family. 17-beta-HSD 3 subfamily.

This Caenorhabditis elegans protein is Putative steroid dehydrogenase 4 (stdh-4).